The chain runs to 399 residues: Enoyl-[acyl-carrier-protein] reductase [NADH] (399 aa).

Residues 48 to 53 (GASTGY), 74 to 75 (FE), 111 to 112 (DA), and 139 to 140 (LA) contribute to the NAD(+) site. Position 225 (Y225) interacts with substrate. Y235 functions as the Proton donor in the catalytic mechanism. NAD(+) is bound by residues K244 and 274-276 (VVT).

The protein belongs to the TER reductase family. As to quaternary structure, monomer.

The enzyme catalyses a 2,3-saturated acyl-[ACP] + NAD(+) = a (2E)-enoyl-[ACP] + NADH + H(+). It functions in the pathway lipid metabolism; fatty acid biosynthesis. In terms of biological role, involved in the final reduction of the elongation cycle of fatty acid synthesis (FAS II). Catalyzes the reduction of a carbon-carbon double bond in an enoyl moiety that is covalently linked to an acyl carrier protein (ACP). This Erwinia tasmaniensis (strain DSM 17950 / CFBP 7177 / CIP 109463 / NCPPB 4357 / Et1/99) protein is Enoyl-[acyl-carrier-protein] reductase [NADH].